The sequence spans 205 residues: Cytochrome c biogenesis ATP-binding export protein CcmA 2 (205 aa).

The 204-residue stretch at 2–205 (LEARDLHCER…LALTGGEAGL (204 aa)) folds into the ABC transporter domain. Residue 34-41 (GGNGAGKT) coordinates ATP.

The protein belongs to the ABC transporter superfamily. CcmA exporter (TC 3.A.1.107) family. The complex is composed of two ATP-binding proteins (CcmA) and two transmembrane proteins (CcmB).

It localises to the cell inner membrane. The catalysed reaction is heme b(in) + ATP + H2O = heme b(out) + ADP + phosphate + H(+). Its function is as follows. Part of the ABC transporter complex CcmAB involved in the biogenesis of c-type cytochromes; once thought to export heme, this seems not to be the case, but its exact role is uncertain. Responsible for energy coupling to the transport system. The chain is Cytochrome c biogenesis ATP-binding export protein CcmA 2 from Salmonella paratyphi A (strain ATCC 9150 / SARB42).